The primary structure comprises 124 residues: Small ribosomal subunit protein uS12 (124 aa).

Position 89 is a 3-methylthioaspartic acid (Asp-89).

The protein belongs to the universal ribosomal protein uS12 family. In terms of assembly, part of the 30S ribosomal subunit. Contacts proteins S8 and S17. May interact with IF1 in the 30S initiation complex.

In terms of biological role, with S4 and S5 plays an important role in translational accuracy. Its function is as follows. Interacts with and stabilizes bases of the 16S rRNA that are involved in tRNA selection in the A site and with the mRNA backbone. Located at the interface of the 30S and 50S subunits, it traverses the body of the 30S subunit contacting proteins on the other side and probably holding the rRNA structure together. The combined cluster of proteins S8, S12 and S17 appears to hold together the shoulder and platform of the 30S subunit. The protein is Small ribosomal subunit protein uS12 of Shewanella oneidensis (strain ATCC 700550 / JCM 31522 / CIP 106686 / LMG 19005 / NCIMB 14063 / MR-1).